A 151-amino-acid chain; its full sequence is Large ribosomal subunit protein eL19 (151 aa).

The tract at residues 62–93 (RLKERRKKRSLKSEGKKSGSRKGKKGARANSK) is disordered. A compositionally biased stretch (basic residues) spans 79-88 (SGSRKGKKGA).

It belongs to the eukaryotic ribosomal protein eL19 family. As to quaternary structure, part of the 50S ribosomal subunit.

In terms of biological role, binds to the 23S rRNA. In Saccharolobus solfataricus (strain ATCC 35092 / DSM 1617 / JCM 11322 / P2) (Sulfolobus solfataricus), this protein is Large ribosomal subunit protein eL19.